Consider the following 141-residue polypeptide: Extracellular globin-1 (141 aa).

Positions 1-141 (DCNTLKRFKV…YAVIAAGIKP (141 aa)) constitute a Globin domain. A disulfide bridge links C2 with C131. H94 contributes to the heme b binding site.

This sequence belongs to the globin family. The giant hemoglobins of worms are formed of a monomeric subunit and a disulfide-bonded trimer. This subunit is monomeric.

It is found in the secreted. The polypeptide is Extracellular globin-1 (Metaphire sieboldi (Earthworm)).